We begin with the raw amino-acid sequence, 303 residues long: Di/tripeptide transport system permease protein DppC (303 aa).

7 consecutive transmembrane segments (helical) span residues Ala33–Val53, Leu103–Leu123, Ala131–Ala151, Val152–Val172, Ala202–Val222, Thr225–Val245, and Trp267–Met287. Positions Ala99–Gly288 constitute an ABC transmembrane type-1 domain.

Belongs to the binding-protein-dependent transport system permease family. OppBC subfamily. In terms of assembly, the complex is composed of two ATP-binding proteins (DppD and DppF), two transmembrane proteins (DppB and DppC) and a solute-binding protein (DppA1-A5). Five orthologous SBPs (DppA1-A5) are present in P.aeruginosa, which increases the substrate specificity of the DppBCDF transporter.

It is found in the cell inner membrane. Its function is as follows. Part of the ABC transporter DppABCDF involved in the uptake of various di/tripeptides. Is also involved in the uptake of phaseolotoxin, a toxic tripeptide inhibiting the enzyme ornithine carbamoyltransferase. Responsible for the translocation of the substrate across the membrane. This is Di/tripeptide transport system permease protein DppC from Pseudomonas aeruginosa (strain UCBPP-PA14).